Consider the following 212-residue polypeptide: Translation initiation factor IF-3 (212 aa).

The interval 171 to 212 (PKSASKKGHTPPKTQVEASKQANESAETEEEKKRCHPTKPVL) is disordered. Polar residues predominate over residues 182-195 (PKTQVEASKQANES).

The protein belongs to the IF-3 family. In terms of assembly, monomer.

It localises to the cytoplasm. Functionally, IF-3 binds to the 30S ribosomal subunit and shifts the equilibrium between 70S ribosomes and their 50S and 30S subunits in favor of the free subunits, thus enhancing the availability of 30S subunits on which protein synthesis initiation begins. The polypeptide is Translation initiation factor IF-3 (Porphyromonas gingivalis (strain ATCC 33277 / DSM 20709 / CIP 103683 / JCM 12257 / NCTC 11834 / 2561)).